We begin with the raw amino-acid sequence, 153 residues long: Putative pre-16S rRNA nuclease (153 aa).

It belongs to the YqgF nuclease family.

It localises to the cytoplasm. Its function is as follows. Could be a nuclease involved in processing of the 5'-end of pre-16S rRNA. The polypeptide is Putative pre-16S rRNA nuclease (Chloroflexus aurantiacus (strain ATCC 29366 / DSM 635 / J-10-fl)).